The sequence spans 277 residues: Putative hydro-lyase BP1875 (277 aa).

The protein belongs to the D-glutamate cyclase family.

This Bordetella pertussis (strain Tohama I / ATCC BAA-589 / NCTC 13251) protein is Putative hydro-lyase BP1875.